The primary structure comprises 148 residues: PTS system fructose-like EIIA component (148 aa).

One can recognise a PTS EIIA type-2 domain in the interval 2–145; it reads AALTASCIDL…DQVLALLNQT (144 aa). H64 functions as the Tele-phosphohistidine intermediate in the catalytic mechanism. H64 is subject to Phosphohistidine; by HPr.

The protein resides in the cytoplasm. Its function is as follows. The phosphoenolpyruvate-dependent sugar phosphotransferase system (sugar PTS), a major carbohydrate active transport system, catalyzes the phosphorylation of incoming sugar substrates concomitantly with their translocation across the cell membrane. The enzyme II FrvAB PTS system is involved in fructose transport. This chain is PTS system fructose-like EIIA component, found in Escherichia coli (strain K12).